The primary structure comprises 702 residues: Ribosomal RNA large subunit methyltransferase K/L (702 aa).

In terms of domain architecture, THUMP spans Leu43 to Leu154.

It belongs to the methyltransferase superfamily. RlmKL family.

It localises to the cytoplasm. It catalyses the reaction guanosine(2445) in 23S rRNA + S-adenosyl-L-methionine = N(2)-methylguanosine(2445) in 23S rRNA + S-adenosyl-L-homocysteine + H(+). It carries out the reaction guanosine(2069) in 23S rRNA + S-adenosyl-L-methionine = N(2)-methylguanosine(2069) in 23S rRNA + S-adenosyl-L-homocysteine + H(+). Specifically methylates the guanine in position 2445 (m2G2445) and the guanine in position 2069 (m7G2069) of 23S rRNA. The protein is Ribosomal RNA large subunit methyltransferase K/L of Escherichia coli O6:H1 (strain CFT073 / ATCC 700928 / UPEC).